The primary structure comprises 101 residues: UPF0134 protein MPN_675 (101 aa).

This sequence belongs to the UPF0134 family.

The polypeptide is UPF0134 protein MPN_675 (Mycoplasma pneumoniae (strain ATCC 29342 / M129 / Subtype 1) (Mycoplasmoides pneumoniae)).